We begin with the raw amino-acid sequence, 362 residues long: Peptide chain release factor 1 (362 aa).

Q237 carries the post-translational modification N5-methylglutamine.

This sequence belongs to the prokaryotic/mitochondrial release factor family. In terms of processing, methylated by PrmC. Methylation increases the termination efficiency of RF1.

It localises to the cytoplasm. In terms of biological role, peptide chain release factor 1 directs the termination of translation in response to the peptide chain termination codons UAG and UAA. The polypeptide is Peptide chain release factor 1 (Legionella pneumophila (strain Corby)).